A 385-amino-acid chain; its full sequence is Putative actin-25 (385 aa).

Belongs to the actin family.

The protein resides in the cytoplasm. The protein localises to the cytoskeleton. The catalysed reaction is ATP + H2O = ADP + phosphate + H(+). Functionally, actins are highly conserved proteins that are involved in various types of cell motility and are ubiquitously expressed in all eukaryotic cells. Multiple isoforms are involved in various cellular functions such as cytoskeleton structure, cell mobility, chromosome movement and muscle contraction. The protein is Putative actin-25 (act25) of Dictyostelium discoideum (Social amoeba).